Here is a 114-residue protein sequence, read N- to C-terminus: PDZK1-interacting protein 1 (114 aa).

The Extracellular segment spans residues 1 to 28; sequence MSAFGLLILGLLTAVPPASCRQGLGNLQ. A helical membrane pass occupies residues 29–51; the sequence is PWMQGLIAVAVFLVLVAIAFAVN. Residues 52–114 lie on the Cytoplasmic side of the membrane; it reads HFWCQEEPEP…EEGKVRSTPM (63 aa). Ser85 is subject to Phosphoserine. Residues 95–114 form a disordered region; the sequence is HENAYENVPEEEGKVRSTPM. Residues 105–114 show a composition bias toward basic and acidic residues; it reads EEGKVRSTPM.

The protein belongs to the PDZK1-interacting protein 1/SMIM24 family. As to quaternary structure, forms a heterodimer (via N-terminal transmembrane helix) with SLC5A2/SGLT2 (via TM13); this interaction enhances SLC5A2 transporter activity. Interacts with PDZK1.

It is found in the apical cell membrane. Its function is as follows. Auxiliary protein of electrogenic Na(+)-coupled sugar symporter SLC5A2/SGLT2 and SLC5A1/SGLT1. Essential for the transporter activity of SLC5A2/SGLT2 but not SLC5A1/SGLT1. The polypeptide is PDZK1-interacting protein 1 (Pongo abelii (Sumatran orangutan)).